Reading from the N-terminus, the 590-residue chain is Nuclear receptor subfamily 2 group C member 1 (590 aa).

Residues Met1 to Met166 are required for interaction with KAT2B. Residues Phe98 to Cys173 constitute a DNA-binding region (nuclear receptor). 2 consecutive NR C4-type zinc fingers follow at residues Cys101–Cys121 and Cys137–Cys156. 2 positions are modified to phosphoserine: Ser185 and Ser203. Thr208 bears the Phosphothreonine mark. A Phosphothreonine; by MAPK1 modification is found at Thr210. Lys238 participates in a covalent cross-link: Glycyl lysine isopeptide (Lys-Gly) (interchain with G-Cter in SUMO); alternate. Residue Lys238 forms a Glycyl lysine isopeptide (Lys-Gly) (interchain with G-Cter in SUMO2); alternate linkage. In terms of domain architecture, NR LBD spans Glu333–Glu577. Ser568 bears the Phosphoserine; by PKC mark. The required for interaction with NRIP1 stretch occupies residues Pro571–Leu590. Lys575 is covalently cross-linked (Glycyl lysine isopeptide (Lys-Gly) (interchain with G-Cter in SUMO2)).

The protein belongs to the nuclear hormone receptor family. NR2 subfamily. In terms of assembly, homodimer. Heterodimer; with NR2C2 which is required for chromatin remodeling and for binding to promoter regions such as globin DR1 repeats. Interacts with ESR1; the interaction prevents homodimerization of ESR1 and suppresses its transcriptional activity and cell growth. Interacts with NRIP1 (via its LXXLL motifs); the interaction provides corepressor activity. Interacts with HDAC3 (via the DNA-binding domain); the interaction recruits phosphorylated NR2C1 to PML bodies for sumoylation. Interacts with HDAC4 (via the DNA-binding domain). Interacts with PIAS1; the interaction is required for sumoylation of NR2C1. Interacts with UBE2I; the interaction is required for sumoylation of NR2C1. Interacts with KAT2B; the interaction acts as a corepressor of gene expression. In terms of processing, sumoylation requires both PIAS1 and UBE2I. Sumoylation appears to dissociate NR2C1 from the PML nuclear bodies. Enhances the interaction with NRIP1 but inhibits interaction with KAT2B. In proliferating cells, stimulation by all-trans retinoic acid, activation of MAPK1-mediated phosphorylation and recruitment to PML bodies with subsequent sumoylation, suppresses OCT4 expression. Phosphorylated on several serine and threonine residues. Phosphorylation on Thr-210, stimulated by all-trans retinoic acid (atRA) mediates PML location and sumoylation in proliferating cells which then modulates its association with effector molecules, KAT2B and NRIP1. Phosphorylation on Ser-568 by PKC is important for protein stability and function as activator of RARB.

The protein resides in the nucleus. Its subcellular location is the PML body. Its function is as follows. Orphan nuclear receptor. Binds the IR7 element in the promoter of its own gene in an autoregulatory negative feedback mechanism. Primarily repressor of a broad range of genes including ESR1 and RARB. Together with NR2C2, forms the core of the DRED (direct repeat erythroid-definitive) complex that represses embryonic and fetal globin transcription. Binds to hormone response elements (HREs) consisting of two 5'-AGGTCA-3' half site direct repeat consensus sequences. Also activator of OCT4 gene expression. Plays a fundamental role in early embryogenesis and regulates embryonic stem cell proliferation and differentiation. Mediator of retinoic acid-regulated preadipocyte proliferation. This Rattus norvegicus (Rat) protein is Nuclear receptor subfamily 2 group C member 1 (Nr2c1).